The chain runs to 307 residues: Acetaldehyde dehydrogenase (307 aa).

C131 functions as the Acyl-thioester intermediate in the catalytic mechanism. NAD(+)-binding positions include 162–170 (SIGPGTRKN) and N273.

Belongs to the acetaldehyde dehydrogenase family.

It carries out the reaction acetaldehyde + NAD(+) + CoA = acetyl-CoA + NADH + H(+). The sequence is that of Acetaldehyde dehydrogenase (nahO) from Stutzerimonas stutzeri (Pseudomonas stutzeri).